Here is a 259-residue protein sequence, read N- to C-terminus: Ubiquinone/menaquinone biosynthesis C-methyltransferase UbiE (259 aa).

Residues Thr82, Asp103, 131–132 (NA), and Ser148 contribute to the S-adenosyl-L-methionine site.

It belongs to the class I-like SAM-binding methyltransferase superfamily. MenG/UbiE family.

It carries out the reaction a 2-demethylmenaquinol + S-adenosyl-L-methionine = a menaquinol + S-adenosyl-L-homocysteine + H(+). It catalyses the reaction a 2-methoxy-6-(all-trans-polyprenyl)benzene-1,4-diol + S-adenosyl-L-methionine = a 5-methoxy-2-methyl-3-(all-trans-polyprenyl)benzene-1,4-diol + S-adenosyl-L-homocysteine + H(+). It participates in quinol/quinone metabolism; menaquinone biosynthesis; menaquinol from 1,4-dihydroxy-2-naphthoate: step 2/2. It functions in the pathway cofactor biosynthesis; ubiquinone biosynthesis. Functionally, methyltransferase required for the conversion of demethylmenaquinol (DMKH2) to menaquinol (MKH2) and the conversion of 2-polyprenyl-6-methoxy-1,4-benzoquinol (DDMQH2) to 2-polyprenyl-3-methyl-6-methoxy-1,4-benzoquinol (DMQH2). The protein is Ubiquinone/menaquinone biosynthesis C-methyltransferase UbiE of Vibrio campbellii (strain ATCC BAA-1116).